An 86-amino-acid chain; its full sequence is uncharacterized protein (86 aa).

Residues 4-24 (LFFTLIAFVAIILLMSIGFII) form a helical membrane-spanning segment.

It is found in the membrane. This is an uncharacterized protein from Haemophilus influenzae (strain ATCC 51907 / DSM 11121 / KW20 / Rd).